The following is a 606-amino-acid chain: MAADVSVTHRPPLSPKSGAEVEAGDAAERRAPEEELPPLDPEEIRKRLEHTERQFRNRRKILIRGLPGDVTNQEVHDLLSDYELKYCFVDKYKGTAFVTLLNGEQAEAAINAFHQSRLRERELSVQLQPTDALLCVANLPPSLTQQQFEELVRPFGSLERCFLVYSERTGQSKGYGFAEYMKKDSAARAKSDLLGKPLGPRTLYVHWTDAGQLTPALLHSRCLCVDRLPPGFNDVDALCRALSAVHSPTFCQLACGQDGQLKGFAVLEYETAEMAEEAQQQADGLSLGGSHLRVSFCAPGPPGRSMLAALIAAQATALNRGKGLLPEPNILQLLNNLGPSASLQLLLNPLLHGSAGGKQGLLGAPPAMPLLNGPALSTALLQLALQTQGQKKPGILGDSPLGALQPGAQPANPLLGELPAGGGLPPELPPRRGKPPPLLPSVLGPAGGDREALGLGPPAAQLTPPPAPVGLRGSGLRGPLSHFYSGSPTSYFTSGLQAGLKQSHLSKAIGSSPLGSGEGLLGLSPGPNGHSHLLKVRAGGGDMQGWEAPAPQRPLTRPALPSVSRPHWAARNAALPTCCPRPSPAQKAAMWASTPRASAATTRTPT.

The segment at 1 to 41 (MAADVSVTHRPPLSPKSGAEVEAGDAAERRAPEEELPPLDP) is disordered. A2 carries the N-acetylalanine modification. 2 positions are modified to phosphoserine: S6 and S14. Positions 45–60 (RKRLEHTERQFRNRRK) match the Nuclear localization signal motif. RRM domains lie at 59–130 (RKIL…LQPT), 132–210 (ALLC…WTDA), and 221–299 (RCLC…FCAP). The interaction with PTBP1 stretch occupies residues 307-395 (LAALIAAQAT…QTQGQKKPGI (89 aa)). The tract at residues 391-474 (KKPGILGDSP…PPAPVGLRGS (84 aa)) is disordered. Residues 453–462 (LGLGPPAAQL) show a composition bias toward low complexity. T463 bears the Phosphothreonine mark. At S474 the chain carries Phosphoserine. P488 carries the phosphothreonine modification. The segment at 519 to 564 (GLLGLSPGPNGHSHLLKVRAGGGDMQGWEAPAPQRPLTRPALPSVS) is disordered. 2 positions are modified to phosphoserine: S562 and H567. Residues 579-606 (CPRPSPAQKAAMWASTPRASAATTRTPT) form a disordered region. Residues 592–606 (ASTPRASAATTRTPT) are compositionally biased toward low complexity.

As to quaternary structure, interacts with PTBP1, RAVER2, VCL and ACTN1. Part of a complex containing RAVER1, VCL and ACTN1.

It localises to the nucleus. The protein localises to the cytoplasm. Its function is as follows. Cooperates with PTBP1 to modulate regulated alternative splicing events. Promotes exon skipping. Cooperates with PTBP1 to modulate switching between mutually exclusive exons during maturation of the TPM1 pre-mRNA. This chain is Ribonucleoprotein PTB-binding 1 (RAVER1), found in Homo sapiens (Human).